The chain runs to 235 residues: 7-cyano-7-deazaguanine synthase (235 aa).

16-26 (FSGGQDSTTCL) provides a ligand contact to ATP. 4 residues coordinate Zn(2+): C195, C204, C207, and C210.

It belongs to the QueC family. It depends on Zn(2+) as a cofactor.

It catalyses the reaction 7-carboxy-7-deazaguanine + NH4(+) + ATP = 7-cyano-7-deazaguanine + ADP + phosphate + H2O + H(+). It participates in purine metabolism; 7-cyano-7-deazaguanine biosynthesis. Catalyzes the ATP-dependent conversion of 7-carboxy-7-deazaguanine (CDG) to 7-cyano-7-deazaguanine (preQ(0)). The polypeptide is 7-cyano-7-deazaguanine synthase (Shewanella frigidimarina (strain NCIMB 400)).